The sequence spans 195 residues: dITP/XTP pyrophosphatase (195 aa).

T9–K14 is a substrate binding site. The Mg(2+) site is built by E41 and D70. Catalysis depends on D70, which acts as the Proton acceptor. Residues S71, F155–D158, K178, and H183–R184 contribute to the substrate site.

This sequence belongs to the HAM1 NTPase family. As to quaternary structure, homodimer. Requires Mg(2+) as cofactor.

The enzyme catalyses XTP + H2O = XMP + diphosphate + H(+). It catalyses the reaction dITP + H2O = dIMP + diphosphate + H(+). The catalysed reaction is ITP + H2O = IMP + diphosphate + H(+). In terms of biological role, pyrophosphatase that catalyzes the hydrolysis of nucleoside triphosphates to their monophosphate derivatives, with a high preference for the non-canonical purine nucleotides XTP (xanthosine triphosphate), dITP (deoxyinosine triphosphate) and ITP. Seems to function as a house-cleaning enzyme that removes non-canonical purine nucleotides from the nucleotide pool, thus preventing their incorporation into DNA/RNA and avoiding chromosomal lesions. In Haemophilus influenzae (strain ATCC 51907 / DSM 11121 / KW20 / Rd), this protein is dITP/XTP pyrophosphatase.